Consider the following 215-residue polypeptide: uncharacterized protein (215 aa).

This is an uncharacterized protein from Archaeoglobus fulgidus (strain ATCC 49558 / DSM 4304 / JCM 9628 / NBRC 100126 / VC-16).